Here is a 175-residue protein sequence, read N- to C-terminus: Peptide deformylase (175 aa).

Positions 99 and 141 each coordinate Fe cation. The active site involves E142. A Fe cation-binding site is contributed by H145.

It belongs to the polypeptide deformylase family. Requires Fe(2+) as cofactor.

It carries out the reaction N-terminal N-formyl-L-methionyl-[peptide] + H2O = N-terminal L-methionyl-[peptide] + formate. Removes the formyl group from the N-terminal Met of newly synthesized proteins. Requires at least a dipeptide for an efficient rate of reaction. N-terminal L-methionine is a prerequisite for activity but the enzyme has broad specificity at other positions. The sequence is that of Peptide deformylase from Rickettsia typhi (strain ATCC VR-144 / Wilmington).